Reading from the N-terminus, the 333-residue chain is Large ribosomal subunit protein mL44 (333 aa).

The transit peptide at 1–30 (MASAVFRLLQQGPRRLLAPAVPTLAPPVRG) directs the protein to the mitochondrion. Positions 86–228 (DLLKTAFINS…LITQMTGKEL (143 aa)) constitute an RNase III domain. One can recognise a DRBM domain in the interval 236–306 (NPMGLLVEEL…ARVALRKLYG (71 aa)). The span at 311 to 327 (RRPWDYSKPKESPKRAE) shows a compositional bias: basic and acidic residues. The disordered stretch occupies residues 311–333 (RRPWDYSKPKESPKRAEQTSVAS).

The protein belongs to the ribonuclease III family. Mitochondrion-specific ribosomal protein mL44 subfamily. In terms of assembly, component of the mitochondrial ribosome large subunit (39S) which comprises a 16S rRNA and about 50 distinct proteins.

It localises to the mitochondrion. In terms of biological role, component of the 39S subunit of mitochondrial ribosome. May have a function in the assembly/stability of nascent mitochondrial polypeptides exiting the ribosome. The sequence is that of Large ribosomal subunit protein mL44 (Mrpl44) from Mus musculus (Mouse).